Here is a 510-residue protein sequence, read N- to C-terminus: NAD(P)H-quinone oxidoreductase subunit 2 B, chloroplastic (510 aa).

The next 13 membrane-spanning stretches (helical) occupy residues 24–44, 57–77, 99–119, 124–144, 149–169, 183–203, 227–247, 295–315, 323–343, 354–374, 395–415, 428–448, and 484–504; these read LLLF…GLIL, LPWF…ALLF, IFQF…VEYI, MAIT…MFLC, LITI…LSGY, YLLM…WLYG, PGIS…LSPA, WHLL…IIAI, MLAY…IVGD, YMLF…LFGL, ALSL…AGFF, GLYS…YYYL, and MIVC…IIAI.

The protein belongs to the complex I subunit 2 family. In terms of assembly, NDH is composed of at least 16 different subunits, 5 of which are encoded in the nucleus.

Its subcellular location is the plastid. It is found in the chloroplast thylakoid membrane. It catalyses the reaction a plastoquinone + NADH + (n+1) H(+)(in) = a plastoquinol + NAD(+) + n H(+)(out). It carries out the reaction a plastoquinone + NADPH + (n+1) H(+)(in) = a plastoquinol + NADP(+) + n H(+)(out). In terms of biological role, NDH shuttles electrons from NAD(P)H:plastoquinone, via FMN and iron-sulfur (Fe-S) centers, to quinones in the photosynthetic chain and possibly in a chloroplast respiratory chain. The immediate electron acceptor for the enzyme in this species is believed to be plastoquinone. Couples the redox reaction to proton translocation, and thus conserves the redox energy in a proton gradient. The polypeptide is NAD(P)H-quinone oxidoreductase subunit 2 B, chloroplastic (Jasminum nudiflorum (Winter jasmine)).